An 87-amino-acid polypeptide reads, in one-letter code: Neurotoxin Cex4 (87 aa).

Residues 1-19 form the signal peptide; sequence MNSLLMITACLFLIGTVWA. In terms of domain architecture, LCN-type CS-alpha/beta spans 20–85; it reads KEGYLVNKST…TYPLPNKSCG (66 aa). Disulfide bonds link cysteine 31–cysteine 84, cysteine 35–cysteine 60, cysteine 44–cysteine 65, and cysteine 48–cysteine 67. A Cysteine amide modification is found at cysteine 84. The propeptide occupies 85–87; sequence GRK.

This sequence belongs to the long (4 C-C) scorpion toxin superfamily. Sodium channel inhibitor family. Beta subfamily. Expressed by the venom gland.

The protein localises to the secreted. Beta toxins bind voltage-independently at site-4 of sodium channels (Nav) and shift the voltage of activation toward more negative potentials thereby affecting sodium channel activation and promoting spontaneous and repetitive firing. This is Neurotoxin Cex4 from Centruroides exilicauda (Bark scorpion).